The primary structure comprises 514 residues: Protein nucleotidyltransferase YdiU (514 aa).

Positions 111, 113, 114, 134, 146, 147, 197, and 204 each coordinate ATP. Residue Asp276 is the Proton acceptor of the active site. Asn277 and Asp286 together coordinate Mg(2+). Position 286 (Asp286) interacts with ATP.

The protein belongs to the SELO family. The cofactor is Mg(2+). It depends on Mn(2+) as a cofactor.

It catalyses the reaction L-seryl-[protein] + ATP = 3-O-(5'-adenylyl)-L-seryl-[protein] + diphosphate. It carries out the reaction L-threonyl-[protein] + ATP = 3-O-(5'-adenylyl)-L-threonyl-[protein] + diphosphate. The catalysed reaction is L-tyrosyl-[protein] + ATP = O-(5'-adenylyl)-L-tyrosyl-[protein] + diphosphate. The enzyme catalyses L-histidyl-[protein] + UTP = N(tele)-(5'-uridylyl)-L-histidyl-[protein] + diphosphate. It catalyses the reaction L-seryl-[protein] + UTP = O-(5'-uridylyl)-L-seryl-[protein] + diphosphate. It carries out the reaction L-tyrosyl-[protein] + UTP = O-(5'-uridylyl)-L-tyrosyl-[protein] + diphosphate. In terms of biological role, nucleotidyltransferase involved in the post-translational modification of proteins. It can catalyze the addition of adenosine monophosphate (AMP) or uridine monophosphate (UMP) to a protein, resulting in modifications known as AMPylation and UMPylation. The sequence is that of Protein nucleotidyltransferase YdiU from Rhodococcus jostii (strain RHA1).